The chain runs to 459 residues: Ribulose bisphosphate carboxylase large chain (459 aa).

Position 4 is an N6,N6,N6-trimethyllysine (Lys-4). The substrate site is built by Asn-113 and Thr-163. Lys-165 acts as the Proton acceptor in catalysis. Substrate is bound at residue Lys-167. The Mg(2+) site is built by Lys-191, Asp-193, and Glu-194. Lys-191 is subject to N6-carboxylysine. His-284 functions as the Proton acceptor in the catalytic mechanism. Substrate contacts are provided by Arg-285, His-317, and Ser-369.

Belongs to the RuBisCO large chain family. Type I subfamily. As to quaternary structure, heterohexadecamer of 8 large chains and 8 small chains; disulfide-linked. The disulfide link is formed within the large subunit homodimers. Requires Mg(2+) as cofactor. The disulfide bond which can form in the large chain dimeric partners within the hexadecamer appears to be associated with oxidative stress and protein turnover.

Its subcellular location is the plastid. It is found in the chloroplast. It catalyses the reaction 2 (2R)-3-phosphoglycerate + 2 H(+) = D-ribulose 1,5-bisphosphate + CO2 + H2O. The enzyme catalyses D-ribulose 1,5-bisphosphate + O2 = 2-phosphoglycolate + (2R)-3-phosphoglycerate + 2 H(+). Its function is as follows. RuBisCO catalyzes two reactions: the carboxylation of D-ribulose 1,5-bisphosphate, the primary event in carbon dioxide fixation, as well as the oxidative fragmentation of the pentose substrate in the photorespiration process. Both reactions occur simultaneously and in competition at the same active site. The protein is Ribulose bisphosphate carboxylase large chain of Micranthes integrifolia (Wholeleaf saxifrage).